The chain runs to 365 residues: tRNA 2-selenouridine synthase (365 aa).

Residues F12–Q136 enclose the Rhodanese domain. Residue C95 is the S-selanylcysteine intermediate of the active site.

This sequence belongs to the SelU family. In terms of assembly, monomer.

It carries out the reaction 5-methylaminomethyl-2-thiouridine(34) in tRNA + selenophosphate + (2E)-geranyl diphosphate + H2O + H(+) = 5-methylaminomethyl-2-selenouridine(34) in tRNA + (2E)-thiogeraniol + phosphate + diphosphate. The enzyme catalyses 5-methylaminomethyl-2-thiouridine(34) in tRNA + (2E)-geranyl diphosphate = 5-methylaminomethyl-S-(2E)-geranyl-thiouridine(34) in tRNA + diphosphate. It catalyses the reaction 5-methylaminomethyl-S-(2E)-geranyl-thiouridine(34) in tRNA + selenophosphate + H(+) = 5-methylaminomethyl-2-(Se-phospho)selenouridine(34) in tRNA + (2E)-thiogeraniol. The catalysed reaction is 5-methylaminomethyl-2-(Se-phospho)selenouridine(34) in tRNA + H2O = 5-methylaminomethyl-2-selenouridine(34) in tRNA + phosphate. Its function is as follows. Involved in the post-transcriptional modification of the uridine at the wobble position (U34) of tRNA(Lys), tRNA(Glu) and tRNA(Gln). Catalyzes the conversion of 2-thiouridine (S2U-RNA) to 2-selenouridine (Se2U-RNA). Acts in a two-step process involving geranylation of 2-thiouridine (S2U) to S-geranyl-2-thiouridine (geS2U) and subsequent selenation of the latter derivative to 2-selenouridine (Se2U) in the tRNA chain. The polypeptide is tRNA 2-selenouridine synthase (Pseudomonas putida (strain W619)).